Reading from the N-terminus, the 44-residue chain is Benzaldehyde dehydrogenase [NAD(+)] II (44 aa).

This sequence belongs to the aldehyde dehydrogenase family.

It carries out the reaction benzaldehyde + NAD(+) + H2O = benzoate + NADH + 2 H(+). This Acinetobacter guillouiae (Acinetobacter genomosp. 11) protein is Benzaldehyde dehydrogenase [NAD(+)] II.